Consider the following 862-residue polypeptide: Semaphorin-4D (862 aa).

The signal sequence occupies residues 1 to 21 (MRMCTPIRGLLMALAVMFGTA). One can recognise a Sema domain in the interval 22 to 500 (MAFAPIPRIT…SNSGVVQAPL (479 aa)). Residues 22-734 (MAFAPIPRIT…TMYLKSSDNR (713 aa)) are Extracellular-facing. N-linked (GlcNAc...) asparagine glycans are attached at residues asparagine 49 and asparagine 77. 2 cysteine pairs are disulfide-bonded: cysteine 97–cysteine 108 and cysteine 126–cysteine 135. Residues asparagine 139 and asparagine 191 are each glycosylated (N-linked (GlcNAc...) asparagine). 2 disulfides stabilise this stretch: cysteine 257–cysteine 370 and cysteine 281–cysteine 326. 3 N-linked (GlcNAc...) asparagine glycosylation sites follow: asparagine 329, asparagine 379, and asparagine 419. The 50-residue stretch at 502 to 551 (FCGKHGTCEDCVLARDPYCAWSPPTATCVALHQTESPSRGLIQEMSGDAS) folds into the PSI domain. 4 cysteine pairs are disulfide-bonded: cysteine 503–cysteine 520, cysteine 509–cysteine 553, cysteine 512–cysteine 529, and cysteine 576–cysteine 624. Positions 554–636 (PDKSKGSYRQ…EERVKNKTVF (83 aa)) constitute an Ig-like C2-type domain. 2 N-linked (GlcNAc...) asparagine glycosylation sites follow: asparagine 613 and asparagine 632. A helical transmembrane segment spans residues 735-755 (LLMSLFLFFFVLFLCLFFYNC). The Cytoplasmic portion of the chain corresponds to 756–862 (YKGYLPRQCL…KFADSDADGD (107 aa)). The tract at residues 794–837 (VEPGSFSQQNGEHPKPALDTGYETEQDTITSKVPTDREDSQRID) is disordered. Positions 827-837 (PTDREDSQRID) are enriched in basic and acidic residues. Position 833 is a phosphoserine (serine 833).

The protein belongs to the semaphorin family. As to quaternary structure, homodimer. Interacts with PLXNB2. Interacts with PLXNB1. In terms of tissue distribution, strongly expressed in skeletal muscle, peripheral blood lymphocytes, spleen, and thymus and also expressed at lower levels in testes, brain, kidney, small intestine, prostate, heart, placenta, lung and pancreas, but not in colon and liver.

It is found in the cell membrane. Its function is as follows. Cell surface receptor for PLXNB1 and PLXNB2 that plays an important role in cell-cell signaling. Regulates GABAergic synapse development. Promotes the development of inhibitory synapses in a PLXNB1-dependent manner. Modulates the complexity and arborization of developing neurites in hippocampal neurons by activating PLXNB1 and interaction with PLXNB1 mediates activation of RHOA. Promotes the migration of cerebellar granule cells. Plays a role in the immune system; induces B-cells to aggregate and improves their viability (in vitro). Induces endothelial cell migration through the activation of PTK2B/PYK2, SRC, and the phosphatidylinositol 3-kinase-AKT pathway. This is Semaphorin-4D (SEMA4D) from Homo sapiens (Human).